The chain runs to 25 residues: Histone H4 (25 aa).

Residues 1–14 (MSGRGKGGKGLGKG) show a composition bias toward gly residues. The disordered stretch occupies residues 1-25 (MSGRGKGGKGLGKGGAKRHRKVLRD). Position 2 is an N-acetylserine (S2). N6-acetyllysine is present on residues K6, K9, K13, K17, and K21. Basic residues predominate over residues 15–25 (GAKRHRKVLRD). Residues 17 to 21 (KRHRK) mediate DNA binding.

The protein belongs to the histone H4 family. In terms of assembly, the nucleosome is a histone octamer containing two molecules each of H2A, H2B, H3 and H4 assembled in one H3-H4 heterotetramer and two H2A-H2B heterodimers. The octamer wraps approximately 147 bp of DNA.

The protein resides in the nucleus. Its subcellular location is the chromosome. Core component of nucleosome. Nucleosomes wrap and compact DNA into chromatin, limiting DNA accessibility to the cellular machineries which require DNA as a template. Histones thereby play a central role in transcription regulation, DNA repair, DNA replication and chromosomal stability. DNA accessibility is regulated via a complex set of post-translational modifications of histones, also called histone code, and nucleosome remodeling. This Medicago sativa (Alfalfa) protein is Histone H4.